The sequence spans 121 residues: MDYRFGRQYRLLKTDDFSSVFAFRNRRSRDLLQVSRSNGNGLDHPRIGLVVGKKTAKRANERNYMKRVIRDWFRLNKNRLPPQDFVVRVRRKFDRATAKQARAELAQLMFGNPATGCRKQA.

It belongs to the RnpA family. Consists of a catalytic RNA component (M1 or rnpB) and a protein subunit.

The enzyme catalyses Endonucleolytic cleavage of RNA, removing 5'-extranucleotides from tRNA precursor.. In terms of biological role, RNaseP catalyzes the removal of the 5'-leader sequence from pre-tRNA to produce the mature 5'-terminus. It can also cleave other RNA substrates such as 4.5S RNA. The protein component plays an auxiliary but essential role in vivo by binding to the 5'-leader sequence and broadening the substrate specificity of the ribozyme. The chain is Ribonuclease P protein component from Neisseria meningitidis serogroup A / serotype 4A (strain DSM 15465 / Z2491).